The following is a 392-amino-acid chain: LL-diaminopimelate aminotransferase (392 aa).

2 residues coordinate substrate: Tyr13 and Gly38. Pyridoxal 5'-phosphate-binding positions include Tyr67, 102 to 103 (SK), Tyr127, Asn177, Tyr208, and 236 to 238 (SCS). Residues Lys103, Tyr127, and Asn177 each contribute to the substrate site. N6-(pyridoxal phosphate)lysine is present on Lys239. Position 247 (Arg247) interacts with pyridoxal 5'-phosphate. Substrate is bound at residue Arg366.

The protein belongs to the class-I pyridoxal-phosphate-dependent aminotransferase family. LL-diaminopimelate aminotransferase subfamily. As to quaternary structure, homodimer. Requires pyridoxal 5'-phosphate as cofactor.

The catalysed reaction is (2S,6S)-2,6-diaminopimelate + 2-oxoglutarate = (S)-2,3,4,5-tetrahydrodipicolinate + L-glutamate + H2O + H(+). The protein operates within amino-acid biosynthesis; L-lysine biosynthesis via DAP pathway; LL-2,6-diaminopimelate from (S)-tetrahydrodipicolinate (aminotransferase route): step 1/1. Its function is as follows. Involved in the synthesis of meso-diaminopimelate (m-DAP or DL-DAP), required for both lysine and peptidoglycan biosynthesis. Catalyzes the direct conversion of tetrahydrodipicolinate to LL-diaminopimelate. Can also use m-DAP instead of LL-DAP as the amino-group donor. The sequence is that of LL-diaminopimelate aminotransferase from Gloeobacter violaceus (strain ATCC 29082 / PCC 7421).